The following is a 307-amino-acid chain: Small ribosomal subunit protein bS1 (307 aa).

S1 motif domains lie at 32–101 (GDTV…LSIR), 119–183 (DATV…LSHR), and 197–265 (GEVV…LSTK).

The protein belongs to the bacterial ribosomal protein bS1 family.

Binds mRNA. The protein is Small ribosomal subunit protein bS1 (rpsA) of Synechococcus sp. (strain ATCC 27144 / PCC 6301 / SAUG 1402/1) (Anacystis nidulans).